The sequence spans 566 residues: 3-oxosteroid 1-dehydrogenase (566 aa).

10-39 (DVVVVGSGAAGMVAALVAAHRGLSTVVVEK) lines the FAD pocket.

Belongs to the FAD-dependent oxidoreductase 2 family. 3-oxosteroid dehydrogenase subfamily. Requires FAD as cofactor.

It carries out the reaction a 3-oxosteroid + A = a 3-oxo-Delta(1)-steroid + AH2. The enzyme catalyses a 3-oxo-Delta(4)-steroid + A = a 3-oxo-Delta(1,4)-steroid + AH2. Functionally, involved in the degradation of cholesterol. Catalyzes the elimination of the C-1 and C-2 hydrogen atoms of the A-ring from the polycyclic ring structure of 3-ketosteroids. Is also involved in the formation of 3-keto-1,4-diene-steroid from 3-keto-4-ene-steroid. This chain is 3-oxosteroid 1-dehydrogenase (kstD), found in Mycobacterium tuberculosis (strain CDC 1551 / Oshkosh).